Here is an 82-residue protein sequence, read N- to C-terminus: Delta-actitoxin-Aeq2b 1 (82 aa).

Positions 1–19 (MNRLMILVFAAVILALASA) are cleaved as a signal peptide. Residues 20–26 (DEDVDIA) constitute a propeptide that is removed on maturation. 3 disulfides stabilise this stretch: C32–C79, C34–C69, and C62–C80.

It belongs to the sea anemone sodium channel inhibitory toxin family. Type I subfamily.

It localises to the secreted. Its subcellular location is the nematocyst. Functionally, binds specifically to voltage-gated sodium channels (Nav), thereby delaying their inactivation during signal transduction. Causes death to crabs. The sequence is that of Delta-actitoxin-Aeq2b 1 from Actinia equina (Beadlet anemone).